Here is a 182-residue protein sequence, read N- to C-terminus: Protein SrpB (182 aa).

A run of 4 helical transmembrane segments spans residues 11–31 (WLGLSFRLLLAMLVGAVIGLN), 43–63 (TFTLVAMGSALFVMVPIQAEG), 73–93 (LSRTVQGVAAGVGFLGAGLIL), and 116–136 (IWITAALGAVIGCGLWQLGLI).

It belongs to the MgtC/SapB family.

Its subcellular location is the cell membrane. The sequence is that of Protein SrpB (srpB) from Synechococcus elongatus (strain ATCC 33912 / PCC 7942 / FACHB-805) (Anacystis nidulans R2).